A 243-amino-acid polypeptide reads, in one-letter code: Variant surface antigen E (243 aa).

The first 29 residues, 1–29 (MKKSIFSKKLLVSFGSLVTLAAIPLIAIS), serve as a signal peptide directing secretion. Cysteine 30 carries the N-palmitoyl cysteine lipid modification. The S-diacylglycerol cysteine moiety is linked to residue cysteine 30. The interval 34 to 243 (TDNLSQSQQP…TTSDGQNQNK (210 aa)) is disordered. A compositionally biased stretch (low complexity) spans 52–92 (GTNTENGSNNGSGSGTTNSSGGTNQSGSASGNGSSNSSVST). The span at 93–243 (PDGQHSNPSN…TTSDGQNQNK (151 aa)) shows a compositional bias: polar residues. A run of 11 repeats spans residues 97–109 (HSNP…SDPK), 110–122 (ESNP…SDPK), 123–135 (ESNP…SDGQ), 136–148 (HSNP…SDPK), 149–161 (ESNP…SDGQ), 162–174 (HSNP…SDGQ), 175–187 (HSNP…SDGQ), 188–200 (HSNP…SDGQ), 201–213 (HSNP…SDGQ), 214–226 (HSNP…SDGQ), and 227–239 (HSNP…SDGQ). The segment at 97–239 (HSNPSNPTTS…PSNPTTSDGQ (143 aa)) is 11 X 13 AA tandem repeats.

The protein resides in the cell membrane. Functionally, responsible for the antigenic diversity for host adaptation. Expression in E.coli of a construct containing vlpD, vlpE, and vlpF yields antigenically distinguishable products corresponding to each gene. This chain is Variant surface antigen E (vlpE), found in Mesomycoplasma hyorhinis (Mycoplasma hyorhinis).